A 1129-amino-acid polypeptide reads, in one-letter code: ATP-dependent DNA helicase mph1 (1129 aa).

Disordered regions lie at residues 1-101, 124-222, and 236-306; these read MTGS…FEDA, TQLT…QNEG, and DAFD…TQHK. Residues 45–63 are compositionally biased toward basic and acidic residues; the sequence is DGTASDVRRRPSENRESQR. Polar residues-rich tracts occupy residues 203–222 and 242–285; these read NTKA…QNEG and ISLS…QTDQ. Residues 297–306 are compositionally biased toward basic and acidic residues; sequence QKDEPPTQHK. One can recognise a Helicase ATP-binding domain in the interval 331 to 499; that stretch reads IAQKGLFHNL…AVIDGLDIAR (169 aa). 344–351 contacts ATP; sequence LPTGLGKT. Positions 447 to 450 match the DEAH box motif; the sequence is DEAH. The 170-residue stretch at 674–843 folds into the Helicase C-terminal domain; that stretch reads VLNHFMDAGE…GSRFTFHDDI (170 aa). Disordered regions lie at residues 863–930, 1018–1060, and 1072–1129; these read IPDE…VEIP, RQGD…STED, and SVVK…DSDD. Basic residues-rich tracts occupy residues 877 to 889 and 1028 to 1044; these read RRGR…PKKF and SPRH…KPRY. A compositionally biased stretch (polar residues) spans 1077-1086; that stretch reads QKQQPFYSSQ.

The protein belongs to the DEAD box helicase family. DEAH subfamily. FANCM sub-subfamily. In terms of assembly, interacts with the MHF histone-fold complex to form the FANCM-MHF complex.

The protein localises to the nucleus. The catalysed reaction is ATP + H2O = ADP + phosphate + H(+). ATP-dependent DNA helicase involved in DNA damage repair by homologous recombination and in genome maintenance. Capable of unwinding D-loops. Plays a role in limiting crossover recombinants during mitotic DNA double-strand break (DSB) repair. Component of a FANCM-MHF complex which promotes gene conversion at blocked replication forks, probably by reversal of the stalled fork. This chain is ATP-dependent DNA helicase mph1, found in Aspergillus oryzae (strain ATCC 42149 / RIB 40) (Yellow koji mold).